The sequence spans 58 residues: Ribulose bisphosphate carboxylase large chain (58 aa).

Residues 1 to 2 (MS) constitute a propeptide that is removed on maturation. An N-acetylproline modification is found at P3. K14 bears the N6,N6,N6-trimethyllysine mark.

It belongs to the RuBisCO large chain family. Type I subfamily. Heterohexadecamer of 8 large chains and 8 small chains.

It is found in the plastid. The protein resides in the chloroplast. It carries out the reaction 2 (2R)-3-phosphoglycerate + 2 H(+) = D-ribulose 1,5-bisphosphate + CO2 + H2O. It catalyses the reaction D-ribulose 1,5-bisphosphate + O2 = 2-phosphoglycolate + (2R)-3-phosphoglycerate + 2 H(+). Its function is as follows. RuBisCO catalyzes two reactions: the carboxylation of D-ribulose 1,5-bisphosphate, the primary event in carbon dioxide fixation, as well as the oxidative fragmentation of the pentose substrate in the photorespiration process. Both reactions occur simultaneously and in competition at the same active site. This Euphorbia characias (Albanian spurge) protein is Ribulose bisphosphate carboxylase large chain (rbcL).